Here is a 72-residue protein sequence, read N- to C-terminus: UPF0426 protein asl4034 (72 aa).

The protein belongs to the UPF0426 family.

The chain is UPF0426 protein asl4034 from Nostoc sp. (strain PCC 7120 / SAG 25.82 / UTEX 2576).